The sequence spans 283 residues: Thymidylate synthase (283 aa).

Residue R22 coordinates dUMP. The active-site Nucleophile is the C160. Residues 180 to 183 (RSCD), N191, and 221 to 223 (HIY) each bind dUMP. Residue D183 coordinates (6R)-5,10-methylene-5,6,7,8-tetrahydrofolate. S282 is a (6R)-5,10-methylene-5,6,7,8-tetrahydrofolate binding site.

This sequence belongs to the thymidylate synthase family. Bacterial-type ThyA subfamily. In terms of assembly, homodimer.

The protein resides in the cytoplasm. The enzyme catalyses dUMP + (6R)-5,10-methylene-5,6,7,8-tetrahydrofolate = 7,8-dihydrofolate + dTMP. The protein operates within pyrimidine metabolism; dTTP biosynthesis. Catalyzes the reductive methylation of 2'-deoxyuridine-5'-monophosphate (dUMP) to 2'-deoxythymidine-5'-monophosphate (dTMP) while utilizing 5,10-methylenetetrahydrofolate (mTHF) as the methyl donor and reductant in the reaction, yielding dihydrofolate (DHF) as a by-product. This enzymatic reaction provides an intracellular de novo source of dTMP, an essential precursor for DNA biosynthesis. The polypeptide is Thymidylate synthase (Haemophilus influenzae (strain ATCC 51907 / DSM 11121 / KW20 / Rd)).